The following is a 448-amino-acid chain: NK1 transcription factor-related protein 1 (448 aa).

Positions 1 to 13 (MSASGPEAPGDIP) are enriched in low complexity. Disordered regions lie at residues 1–80 (MSAS…LRPT), 115–299 (ASAP…PRRA), and 350–397 (KWKK…GAPL). The span at 14 to 30 (ALPPPPQPGSGPAPPAP) shows a compositional bias: pro residues. 2 stretches are compositionally biased toward low complexity: residues 62–79 (PAAPEGAGAARPAAPLRP) and 115–129 (ASAPCAPAPAASGRP). The span at 130 to 139 (PRAEELERRA) shows a compositional bias: basic and acidic residues. The span at 186 to 203 (SGDEVPDDEDDDEDEAPE) shows a compositional bias: acidic residues. The segment covering 205–214 (EAARGAEEAR) has biased composition (basic and acidic residues). Composition is skewed to gly residues over residues 215–227 (GGGGGLGARGSGC) and 259–270 (PPGGAAAPGGAG). The span at 271–280 (TTPQGTATAA) shows a compositional bias: low complexity. The homeobox DNA-binding region spans 296–355 (PRRARTAFTYEQLVALENKFKATRYLSVCERLNLALSLSLTETQVKIWFQNRRTKWKKQN). Gly residues predominate over residues 364-382 (TGGGGGPGPGAGPGTGLPG).

It belongs to the NK-1 homeobox family. Expressed in hemopoietic progenitor cells.

Its subcellular location is the nucleus. May be required for the coordinated crosstalk of factors involved in the maintenance of energy homeostasis, possibly by regulating the transcription of specific factors involved in energy balance. In Homo sapiens (Human), this protein is NK1 transcription factor-related protein 1.